The chain runs to 240 residues: UDP-2,3-diacylglucosamine hydrolase (240 aa).

Residues Asp-8, His-10, Asp-41, Asn-79, and His-114 each contribute to the Mn(2+) site. 79 to 80 (NR) contributes to the substrate binding site. Asp-122, Ser-160, Asn-164, Lys-167, and His-195 together coordinate substrate. His-195 and His-197 together coordinate Mn(2+).

Belongs to the LpxH family. The cofactor is Mn(2+).

It localises to the cell inner membrane. It catalyses the reaction UDP-2-N,3-O-bis[(3R)-3-hydroxytetradecanoyl]-alpha-D-glucosamine + H2O = 2-N,3-O-bis[(3R)-3-hydroxytetradecanoyl]-alpha-D-glucosaminyl 1-phosphate + UMP + 2 H(+). It participates in glycolipid biosynthesis; lipid IV(A) biosynthesis; lipid IV(A) from (3R)-3-hydroxytetradecanoyl-[acyl-carrier-protein] and UDP-N-acetyl-alpha-D-glucosamine: step 4/6. Functionally, hydrolyzes the pyrophosphate bond of UDP-2,3-diacylglucosamine to yield 2,3-diacylglucosamine 1-phosphate (lipid X) and UMP by catalyzing the attack of water at the alpha-P atom. Involved in the biosynthesis of lipid A, a phosphorylated glycolipid that anchors the lipopolysaccharide to the outer membrane of the cell. This Escherichia coli O6:H1 (strain CFT073 / ATCC 700928 / UPEC) protein is UDP-2,3-diacylglucosamine hydrolase.